The chain runs to 179 residues: Large ribosomal subunit protein uL5 (179 aa).

This sequence belongs to the universal ribosomal protein uL5 family. As to quaternary structure, part of the 50S ribosomal subunit; part of the 5S rRNA/L5/L18/L25 subcomplex. Contacts the 5S rRNA and the P site tRNA. Forms a bridge to the 30S subunit in the 70S ribosome.

Functionally, this is one of the proteins that bind and probably mediate the attachment of the 5S RNA into the large ribosomal subunit, where it forms part of the central protuberance. In the 70S ribosome it contacts protein S13 of the 30S subunit (bridge B1b), connecting the 2 subunits; this bridge is implicated in subunit movement. Contacts the P site tRNA; the 5S rRNA and some of its associated proteins might help stabilize positioning of ribosome-bound tRNAs. The sequence is that of Large ribosomal subunit protein uL5 from Prochlorococcus marinus (strain MIT 9301).